Here is a 613-residue protein sequence, read N- to C-terminus: V-type proton ATPase catalytic subunit A isoform 2 (613 aa).

240-247 (GAFGCGKT) lines the ATP pocket.

The protein belongs to the ATPase alpha/beta chains family. V-ATPase is a heteromultimeric enzyme composed of a peripheral catalytic V1 complex (main components: subunits A, B, C, D, E, and F) attached to an integral membrane V0 proton pore complex (main component: the proteolipid protein).

The enzyme catalyses ATP + H2O + 4 H(+)(in) = ADP + phosphate + 5 H(+)(out). In terms of biological role, catalytic subunit of the peripheral V1 complex of vacuolar ATPase. V-ATPase vacuolar ATPase is responsible for acidifying a variety of intracellular compartments in eukaryotic cells. This Acetabularia acetabulum (Mermaid's wine glass) protein is V-type proton ATPase catalytic subunit A isoform 2.